Consider the following 638-residue polypeptide: MPIITLPDGSKKVFEKSVTILEIAQSIGAGLAKATIAGKVNDVLLDATIPINKDSKVVIITSKDKEGIEIIRHSFAHLIGHAVKQIYSDIKMAIGPVIEDGFYYDIFSEYRFTPEDLIKIENRINQLIKTNYDVEILQVSKEEAIKTFKERDETFKLRIIEEIPEEGLINLYKHEEYIDMCRGPHVPNTRHLRHFKLLKLSGSYWRGNSENESLQRIYGTAWAKEKELKDYLTRIEEAEKRDHRKLGKKHSLFHIQEESPGMIFWHPNGWTIYQVLEKYIREILKKNDYLEIKTPQAVDKSLWEKSGHWEKFRDDMFTTASENRTYAIKPMNCPCHIQIFNQGLKSYKDLPIRLAEFGSCHRNEPSGALHGLMRVRNFTQDDAHIFCTEEQIQEEVSTFIDLVFEVYKTFGFDEIIIKLSTRPEKRVGSEDIWDKSEEALTKALDNKNLKWELQPGEGAFYGPKIEFSLKDCLNRVWQCGTIQVDFSMPIRLDATYVDIDNEKRNPVMLHRAILGSFERFIGILIEQYEAKFPIWLAPYQIILLSITDRNIEKCLKFNELINNNGYRSKVDIRNEKIGYKIREATLGRVPLIAVIGDKEEEIDSVALRALNGKNLGIFNLPNLFKLMDELIEKKGRTE.

Residues 1–61 (MPIITLPDGS…NKDSKVVIIT (61 aa)) enclose the TGS domain. Residues 242 to 533 (DHRKLGKKHS…LIEQYEAKFP (292 aa)) are catalytic. Residues C333, H384, and H510 each contribute to the Zn(2+) site.

This sequence belongs to the class-II aminoacyl-tRNA synthetase family. Homodimer. Requires Zn(2+) as cofactor.

It is found in the cytoplasm. It catalyses the reaction tRNA(Thr) + L-threonine + ATP = L-threonyl-tRNA(Thr) + AMP + diphosphate + H(+). In terms of biological role, catalyzes the attachment of threonine to tRNA(Thr) in a two-step reaction: L-threonine is first activated by ATP to form Thr-AMP and then transferred to the acceptor end of tRNA(Thr). Also edits incorrectly charged L-seryl-tRNA(Thr). This is Threonine--tRNA ligase from Prochlorococcus marinus (strain AS9601).